The primary structure comprises 29 residues: Cytochrome b6-f complex subunit 8 (29 aa).

The chain crosses the membrane as a helical span at residues 3-23 (ILTLGWVGLLGLFTYSIAMVV).

Belongs to the PetN family. In terms of assembly, the 4 large subunits of the cytochrome b6-f complex are cytochrome b6, subunit IV (17 kDa polypeptide, PetD), cytochrome f and the Rieske protein, while the 4 small subunits are PetG, PetL, PetM and PetN. The complex functions as a dimer.

It is found in the cellular thylakoid membrane. In terms of biological role, component of the cytochrome b6-f complex, which mediates electron transfer between photosystem II (PSII) and photosystem I (PSI), cyclic electron flow around PSI, and state transitions. In Cyanothece sp. (strain PCC 7425 / ATCC 29141), this protein is Cytochrome b6-f complex subunit 8.